The following is a 408-amino-acid chain: Acetate kinase (408 aa).

Residue asparagine 7 coordinates Mg(2+). Lysine 14 is an ATP binding site. Arginine 98 provides a ligand contact to substrate. Residue aspartate 155 is the Proton donor/acceptor of the active site. ATP is bound by residues 214 to 218, 289 to 291, and 337 to 341; these read HLGNG, DLR, and GVGEN. Residue glutamate 390 coordinates Mg(2+).

This sequence belongs to the acetokinase family. As to quaternary structure, homodimer. Mg(2+) serves as cofactor. Requires Mn(2+) as cofactor.

The protein localises to the cytoplasm. It carries out the reaction acetate + ATP = acetyl phosphate + ADP. It functions in the pathway metabolic intermediate biosynthesis; acetyl-CoA biosynthesis; acetyl-CoA from acetate: step 1/2. Functionally, catalyzes the formation of acetyl phosphate from acetate and ATP. Can also catalyze the reverse reaction. This chain is Acetate kinase, found in Cyanothece sp. (strain PCC 7425 / ATCC 29141).